The following is a 106-amino-acid chain: Transcriptional and immune response regulator (106 aa).

In terms of assembly, monomer. Interacts with NOTCH2 (via ANK repeats), the interaction inhibits the nuclear translocation of NOTCH2 N2ICD. Interacts (C-terminus) with CBY1 (C-terminus), TCIM competes with CTNNB1 for the interaction with CBY1. As to expression, expressed in liver, expression levels decrease in regenerating liver. In bone marrow, expressed in large progenitor-like cells, cells with ring-shaped nuclei and, at lower, levels in hematopietic stem cell-like cells with round nuclei (at protein level).

The protein localises to the cytoplasm. The protein resides in the nucleus. It localises to the nucleolus. It is found in the nucleus speckle. Functionally, seems to be involved in the regulation of cell growth an differentiation, may play different and opposite roles depending on the tissue or cell type. May enhance the WNT-CTNNB1 pathway by relieving antagonistic activity of CBY1. Enhances the proliferation of follicular dendritic cells. Plays a role in the mitogen-activated MAPK2/3 signaling pathway, positively regulates G1-to-S-phase transition of the cell cycle. In endothelial cells, enhances key inflammatory mediators and inflammatory response through the modulation of NF-kappaB transcriptional regulatory activity. Involved in the regulation of heat shock response, seems to play a positive feedback with HSF1 to modulate heat-shock downstream gene expression. Plays a role in the regulation of hematopoiesis even if the mechanisms are unknown. In cancers such as thyroid or lung cancer, it has been described as promoter of cell proliferation, G1-to-S-phase transition and inhibitor of apoptosis. However, it negatively regulates self-renewal of liver cancer cells via suppresion of NOTCH2 signaling. This Mus musculus (Mouse) protein is Transcriptional and immune response regulator.